Here is a 38-residue protein sequence, read N- to C-terminus: Toxin CSTX-16 (38 aa).

Residues Gln-19 and Gln-38 each carry the glutamine amide modification.

The protein belongs to the cationic peptide 04 (cupiennin) family. 10 (double chain) subfamily. In terms of tissue distribution, expressed by the venom gland.

The protein localises to the secreted. The chain is Toxin CSTX-16 from Cupiennius salei (American wandering spider).